We begin with the raw amino-acid sequence, 54 residues long: Relaxin (54 aa).

Residue Gln1 is modified to Pyrrolidone carboxylic acid. Cystine bridges form between Cys10–Cys41, Cys22–Cys54, and Cys40–Cys45.

Belongs to the insulin family. Heterodimer of a B chain and an A chain linked by two disulfide bonds.

The protein resides in the secreted. Its function is as follows. Relaxin is an ovarian hormone that acts with estrogen to produce dilatation of the birth canal in many mammals. The polypeptide is Relaxin (Balaenoptera acutorostrata (Common minke whale)).